The sequence spans 169 residues: Photosystem I assembly protein Ycf3 (169 aa).

TPR repeat units lie at residues 35–68 (AFTY…ETDP), 72–105 (SYIL…NPSL), and 120–153 (GEQA…APGN).

The protein belongs to the Ycf3 family.

Its subcellular location is the plastid. The protein resides in the chloroplast thylakoid membrane. In terms of biological role, essential for the assembly of the photosystem I (PSI) complex. May act as a chaperone-like factor to guide the assembly of the PSI subunits. This is Photosystem I assembly protein Ycf3 from Pinus koraiensis (Korean pine).